The primary structure comprises 316 residues: DDRGK domain-containing protein 1 (316 aa).

Residues 1–3 (MVE) lie on the Lumenal side of the membrane. A helical transmembrane segment spans residues 4 to 24 (LDYLFLGSVGFLTIALMLIIL). Topologically, residues 25–316 (RIIKLYFDEK…VEHVSELTAA (292 aa)) are cytoplasmic. Positions 147-187 (LEQEKEKRLQKEREKQMEQEEEERKRKCREREEREKREEEE) are disordered.

It belongs to the DDRGK1 family.

It localises to the endoplasmic reticulum membrane. Functionally, substrate adapter for ufmylation, the covalent attachment of the ubiquitin-like modifier UFM1 to substrate proteins. This chain is DDRGK domain-containing protein 1, found in Brugia malayi (Filarial nematode worm).